Reading from the N-terminus, the 194-residue chain is Isopentenyl-diphosphate Delta-isomerase (194 aa).

Residues His35 and His42 each coordinate Mn(2+). The Nudix hydrolase domain occupies 40 to 174; the sequence is PLHLAFSSYL…PWALSPWSVD (135 aa). Residue Cys77 is part of the active site. His79 contributes to the Mn(2+) binding site. Residue Glu97 participates in Mg(2+) binding. 2 residues coordinate Mn(2+): Glu124 and Glu126. Glu126 is a catalytic residue.

The protein belongs to the IPP isomerase type 1 family. Requires Mg(2+) as cofactor. The cofactor is Mn(2+).

It localises to the cytoplasm. The enzyme catalyses isopentenyl diphosphate = dimethylallyl diphosphate. It functions in the pathway isoprenoid biosynthesis; dimethylallyl diphosphate biosynthesis; dimethylallyl diphosphate from isopentenyl diphosphate: step 1/1. In terms of biological role, catalyzes the 1,3-allylic rearrangement of the homoallylic substrate isopentenyl (IPP) to its highly electrophilic allylic isomer, dimethylallyl diphosphate (DMAPP). This chain is Isopentenyl-diphosphate Delta-isomerase, found in Frankia alni (strain DSM 45986 / CECT 9034 / ACN14a).